We begin with the raw amino-acid sequence, 266 residues long: 3-methyl-2-oxobutanoate hydroxymethyltransferase (266 aa).

Residues D45 and D84 each coordinate Mg(2+). 3-methyl-2-oxobutanoate-binding positions include 45-46 (DS), D84, and K113. Residue E115 participates in Mg(2+) binding. E183 functions as the Proton acceptor in the catalytic mechanism.

The protein belongs to the PanB family. Homodecamer; pentamer of dimers. It depends on Mg(2+) as a cofactor.

It localises to the cytoplasm. The catalysed reaction is 3-methyl-2-oxobutanoate + (6R)-5,10-methylene-5,6,7,8-tetrahydrofolate + H2O = 2-dehydropantoate + (6S)-5,6,7,8-tetrahydrofolate. It functions in the pathway cofactor biosynthesis; (R)-pantothenate biosynthesis; (R)-pantoate from 3-methyl-2-oxobutanoate: step 1/2. Catalyzes the reversible reaction in which hydroxymethyl group from 5,10-methylenetetrahydrofolate is transferred onto alpha-ketoisovalerate to form ketopantoate. The polypeptide is 3-methyl-2-oxobutanoate hydroxymethyltransferase (Coxiella burnetii (strain Dugway 5J108-111)).